The primary structure comprises 138 residues: MAQKLKLEMVTPAAQVLSEEVDEIAAPGSLGQFGVLPGHTPLLTTLQVGEFSYRKGSDVYYLAVNWGYVEVAEDRVLVLVETAETQDHIDLARAKAALGRAEARLRELTPADKEYHNMQAALQRAMVRIQVAGRGGRG.

Belongs to the ATPase epsilon chain family. In terms of assembly, F-type ATPases have 2 components, CF(1) - the catalytic core - and CF(0) - the membrane proton channel. CF(1) has five subunits: alpha(3), beta(3), gamma(1), delta(1), epsilon(1). CF(0) has three main subunits: a, b and c.

The protein localises to the cell inner membrane. In terms of biological role, produces ATP from ADP in the presence of a proton gradient across the membrane. The polypeptide is ATP synthase epsilon chain 2 (Syntrophotalea carbinolica (strain DSM 2380 / NBRC 103641 / GraBd1) (Pelobacter carbinolicus)).